An 85-amino-acid chain; its full sequence is Small ribosomal subunit protein bS16 (85 aa).

Belongs to the bacterial ribosomal protein bS16 family.

The protein is Small ribosomal subunit protein bS16 of Nitrosomonas eutropha (strain DSM 101675 / C91 / Nm57).